Here is a 157-residue protein sequence, read N- to C-terminus: 2-C-methyl-D-erythritol 2,4-cyclodiphosphate synthase (157 aa).

Residues Asp-8 and His-10 each coordinate a divalent metal cation. 4-CDP-2-C-methyl-D-erythritol 2-phosphate is bound by residues 8–10 and 35–36; these read DIH and HS. An a divalent metal cation-binding site is contributed by His-43. 4-CDP-2-C-methyl-D-erythritol 2-phosphate contacts are provided by residues 57-59, 62-66, and Lys-142; these read DIG and FPNND.

It belongs to the IspF family. In terms of assembly, homotrimer. Requires a divalent metal cation as cofactor.

The catalysed reaction is 4-CDP-2-C-methyl-D-erythritol 2-phosphate = 2-C-methyl-D-erythritol 2,4-cyclic diphosphate + CMP. The protein operates within isoprenoid biosynthesis; isopentenyl diphosphate biosynthesis via DXP pathway; isopentenyl diphosphate from 1-deoxy-D-xylulose 5-phosphate: step 4/6. Involved in the biosynthesis of isopentenyl diphosphate (IPP) and dimethylallyl diphosphate (DMAPP), two major building blocks of isoprenoid compounds. Catalyzes the conversion of 4-diphosphocytidyl-2-C-methyl-D-erythritol 2-phosphate (CDP-ME2P) to 2-C-methyl-D-erythritol 2,4-cyclodiphosphate (ME-CPP) with a corresponding release of cytidine 5-monophosphate (CMP). The sequence is that of 2-C-methyl-D-erythritol 2,4-cyclodiphosphate synthase from Wigglesworthia glossinidia brevipalpis.